The chain runs to 204 residues: Ribonuclease HII (204 aa).

The 190-residue stretch at 14–203 (VGLCGVDEAG…VRLLLDQTSL (190 aa)) folds into the RNase H type-2 domain. Asp-20, Glu-21, and Asp-112 together coordinate a divalent metal cation.

The protein belongs to the RNase HII family. Requires Mn(2+) as cofactor. It depends on Mg(2+) as a cofactor.

The protein resides in the cytoplasm. The enzyme catalyses Endonucleolytic cleavage to 5'-phosphomonoester.. Its function is as follows. Endonuclease that specifically degrades the RNA of RNA-DNA hybrids. The protein is Ribonuclease HII of Thiobacillus denitrificans (strain ATCC 25259 / T1).